The chain runs to 143 residues: Large ribosomal subunit protein uL11 (143 aa).

Belongs to the universal ribosomal protein uL11 family. Part of the ribosomal stalk of the 50S ribosomal subunit. Interacts with L10 and the large rRNA to form the base of the stalk. L10 forms an elongated spine to which L12 dimers bind in a sequential fashion forming a multimeric L10(L12)X complex. One or more lysine residues are methylated.

In terms of biological role, forms part of the ribosomal stalk which helps the ribosome interact with GTP-bound translation factors. This is Large ribosomal subunit protein uL11 from Pseudomonas fluorescens (strain SBW25).